We begin with the raw amino-acid sequence, 351 residues long: S-adenosylmethionine:tRNA ribosyltransferase-isomerase (351 aa).

It belongs to the QueA family. As to quaternary structure, monomer.

It localises to the cytoplasm. It catalyses the reaction 7-aminomethyl-7-carbaguanosine(34) in tRNA + S-adenosyl-L-methionine = epoxyqueuosine(34) in tRNA + adenine + L-methionine + 2 H(+). The protein operates within tRNA modification; tRNA-queuosine biosynthesis. Functionally, transfers and isomerizes the ribose moiety from AdoMet to the 7-aminomethyl group of 7-deazaguanine (preQ1-tRNA) to give epoxyqueuosine (oQ-tRNA). In Hahella chejuensis (strain KCTC 2396), this protein is S-adenosylmethionine:tRNA ribosyltransferase-isomerase.